The following is a 211-amino-acid chain: Somatotropin (211 aa).

Positions 1–23 (MASGFLLCPVLLAVFFMSPVEVG) are cleaved as a signal peptide. Residue H40 participates in Zn(2+) binding. C73 and C184 form a disulfide bridge. E193 is a binding site for Zn(2+). C201 and C209 form a disulfide bridge.

Belongs to the somatotropin/prolactin family.

It is found in the secreted. Its function is as follows. Growth hormone plays an important role in growth control and is involved in the regulation of several anabolic processes. Implicated as an osmoregulatory substance important for seawater adaptation. The protein is Somatotropin (gh) of Lepisosteus osseus (Long-nosed gar).